A 262-amino-acid polypeptide reads, in one-letter code: Small ribosomal subunit protein eS1y (262 aa).

Positions 1-18 are enriched in basic residues; sequence MAVGKNKRISKGRKGGKK. The interval 1 to 21 is disordered; the sequence is MAVGKNKRISKGRKGGKKKAV.

This sequence belongs to the eukaryotic ribosomal protein eS1 family. Component of the small ribosomal subunit. Mature ribosomes consist of a small (40S) and a large (60S) subunit. The 40S subunit contains about 33 different proteins and 1 molecule of RNA (18S). The 60S subunit contains about 49 different proteins and 3 molecules of RNA (25S, 5.8S and 5S).

It is found in the cytoplasm. This chain is Small ribosomal subunit protein eS1y, found in Arabidopsis thaliana (Mouse-ear cress).